We begin with the raw amino-acid sequence, 205 residues long: dITP/XTP pyrophosphatase (205 aa).

Thr11–Lys16 serves as a coordination point for substrate. Mg(2+) is bound by residues Glu44 and Asp73. Asp73 functions as the Proton acceptor in the catalytic mechanism. Substrate-binding positions include Ser74, Phe158–Asp161, Lys181, and His186–Arg187.

It belongs to the HAM1 NTPase family. In terms of assembly, homodimer. Mg(2+) serves as cofactor.

It carries out the reaction XTP + H2O = XMP + diphosphate + H(+). The catalysed reaction is dITP + H2O = dIMP + diphosphate + H(+). The enzyme catalyses ITP + H2O = IMP + diphosphate + H(+). In terms of biological role, pyrophosphatase that catalyzes the hydrolysis of nucleoside triphosphates to their monophosphate derivatives, with a high preference for the non-canonical purine nucleotides XTP (xanthosine triphosphate), dITP (deoxyinosine triphosphate) and ITP. Seems to function as a house-cleaning enzyme that removes non-canonical purine nucleotides from the nucleotide pool, thus preventing their incorporation into DNA/RNA and avoiding chromosomal lesions. The polypeptide is dITP/XTP pyrophosphatase (Bacillus cereus (strain ATCC 14579 / DSM 31 / CCUG 7414 / JCM 2152 / NBRC 15305 / NCIMB 9373 / NCTC 2599 / NRRL B-3711)).